The following is an 824-amino-acid chain: Disintegrin and metalloproteinase domain-containing protein 17 (824 aa).

The N-terminal stretch at 1–17 is a signal peptide; it reads MRQSLLFLTSVVPFVLA. A propeptide spanning residues 18–214 is cleaved from the precursor; it reads PRPPDDPGFG…PEELVHRVKR (197 aa). Asn-103, Asn-157, and Asn-174 each carry an N-linked (GlcNAc...) asparagine glycan. A Cysteine switch motif is present at residues 182 to 189; it reads KVCGYLKV. Cys-184 is a Zn(2+) binding site. Residues 215 to 671 are Extracellular-facing; it reads RADPDPMKNT…NTFGKFLADN (457 aa). The 252-residue stretch at 223 to 474 folds into the Peptidase M12B domain; sequence NTCKLLVVAD…KAQECFQERS (252 aa). Disulfide bonds link Cys-225–Cys-333, Cys-365–Cys-469, and Cys-423–Cys-453. Asn-264 carries an N-linked (GlcNAc...) asparagine glycan. Residue His-405 coordinates Zn(2+). Glu-406 is an active-site residue. Zn(2+) is bound by residues His-409 and His-415. N-linked (GlcNAc...) asparagine glycosylation is found at Asn-452, Asn-498, Asn-539, and Asn-551. The Disintegrin domain maps to 475-563; it reads NKVCGNSRVD…ECPPPGNAED (89 aa). Intrachain disulfides connect Cys-534/Cys-555, Cys-573/Cys-582, Cys-578/Cys-591, and Cys-593/Cys-600. N-linked (GlcNAc...) asparagine glycosylation occurs at Asn-594. The tract at residues 603–671 is crambin-like; sequence CCRDLSGRCV…NTFGKFLADN (69 aa). The chain crosses the membrane as a helical span at residues 672 to 692; that stretch reads IVGSVLVFSLIFWIPFSILVH. Residues 693 to 824 are Cytoplasmic-facing; sequence CVDKKLDKQY…NRVDSKETEC (132 aa). 2 consecutive short sequence motifs (SH3-binding) follow at residues 731–738 and 741–748; these read PAPQTPGR and PAPVIPSA. The disordered stretch occupies residues 732–824; that stretch reads APQTPGRLQP…NRVDSKETEC (93 aa). Thr-735 is modified (phosphothreonine; by MAPK14). Residues 741 to 752 show a composition bias toward low complexity; the sequence is PAPVIPSAPAAP. Thr-761 carries the phosphothreonine modification. A Phosphoserine modification is found at Ser-767. 3 stretches are compositionally biased toward basic and acidic residues: residues 768–781, 791–807, and 815–824; these read TDSH…EKDP, SFED…EKAA, and NRVDSKETEC. Phosphoserine occurs at positions 791 and 819.

Interacts with MAD2L1, MAPK14 and MUC1. Interacts with iRhom1/RHBDF1 and iRhom2/RHBDF2. Interacts with FRMD8 via its interaction with iRhom1/RHBDF1 and iRhom2/RHBDF2. Interacts with TSPAN8. Zn(2+) is required as a cofactor. Post-translationally, the precursor is cleaved by a furin endopeptidase. Phosphorylated. Stimulation by growth factor or phorbol 12-myristate 13-acetate induces phosphorylation of Ser-819 but decreases phosphorylation of Ser-791. Phosphorylation at Thr-735 by MAPK14 is required for ADAM17-mediated ectodomain shedding. As to expression, ubiquitously expressed. Expressed at highest levels in adult heart, placenta, skeletal muscle, pancreas, spleen, thymus, prostate, testes, ovary and small intestine, and in fetal brain, lung, liver and kidney. Expressed in natural killer cells (at protein level).

It is found in the cell membrane. The enzyme catalyses Narrow endopeptidase specificity. Cleaves Pro-Leu-Ala-Gln-Ala-|-Val-Arg-Ser-Ser-Ser in the membrane-bound, 26-kDa form of tumor necrosis factor alpha (TNFalpha). Similarly cleaves other membrane-anchored, cell-surface proteins to 'shed' the extracellular domains.. Transmembrane metalloprotease which mediates the ectodomain shedding of a myriad of transmembrane proteins including adhesion proteins, growth factor precursors and cytokines important for inflammation and immunity. Cleaves the membrane-bound precursor of TNF-alpha to its mature soluble form. Responsible for the proteolytical release of soluble JAM3 from endothelial cells surface. Responsible for the proteolytic release of several other cell-surface proteins, including p75 TNF-receptor, interleukin 1 receptor type II, p55 TNF-receptor, transforming growth factor-alpha, L-selectin, growth hormone receptor, MUC1 and the amyloid precursor protein. Acts as an activator of Notch pathway by mediating cleavage of Notch, generating the membrane-associated intermediate fragment called Notch extracellular truncation (NEXT). Plays a role in the proteolytic processing of ACE2. Plays a role in hemostasis through shedding of GP1BA, the platelet glycoprotein Ib alpha chain. Mediates the proteolytic cleavage of LAG3, leading to release the secreted form of LAG3. Mediates the proteolytic cleavage of IL6R, leading to the release of secreted form of IL6R. Mediates the proteolytic cleavage and shedding of FCGR3A upon NK cell stimulation, a mechanism that allows for increased NK cell motility and detachment from opsonized target cells. Cleaves TREM2, resulting in shedding of the TREM2 ectodomain. This Homo sapiens (Human) protein is Disintegrin and metalloproteinase domain-containing protein 17.